The following is an 830-amino-acid chain: MGKKKKKRKSSAFKIILNVFLSIFLVAGVAFGGIVFAMIKTAPPLNVQQVLTFDEPSILYDDKGQYMDKVITNEQRIVVDYKNVPQNLKNAFVSIEDERFYKHHGVDIKRFTGVILINVTNKIKRSSKLQGASTLTQQLIKNTVLSSEVSIKRKVQEMYLSIQLEKELSKDEILGAYMNSIFLGGNALGVEAASKQYFNKSVKDLSLIECAFIAGVPQSPSVYYPYSSASKKNPSIYLNRTKTVLYKMLDNGYITQNDYNKALKDLDSKKLVFAKPSAPSNKLAYEWFSIPAIEQVKKDLKTQYKYDDKQIHNLLVNGGLKVYTTMNKNLQDKTQNTINNAYYLNSYKSNGMIYPQASAVIMDYHNGEVKTIIGGRGDQPARSYNRAASYNYLRPAGSSIKPLTVYSAAIDSKKATAATGFEDSPIPNNIGRKYSSGAPYNPKNSPDIYYGYVNVREALMRSINVVAVKLVDKIGLNTSIQYAEKFGIPIDQHDRSSIASLSLGELHKGTNPLIMAQAYGVFGNNGTYTEAKLYTKVVDRTGKVLLEPKTNTKKVLSPEAAFITYDMLQGPVSESGTGPQANFGNMEVRGKTGTSSDMKNLWFCGLTPYYSAAVWIGNDNSSTVDGVYSSTAARLWGDIMKEFHVNLPYKQVQKPASVVTANVDRISGKLPTQLSYRDPRGSTVYNEFFINGTIPTEYDDIHVEAQINKLTGKLASKFTPSFLVESRVFLRRDYSPGVELLDQQWLLPYSIDEGGSLPPTEEKNNSNTRDKNKDKNKNKNKDKNPSQDKPNNNNNDNNSNNNNNNNDNNNNTKPPENDSNQNHEDNKNKQ.

Residues 1–18 (MGKKKKKRKSSAFKIILN) lie on the Cytoplasmic side of the membrane. The chain crosses the membrane as a helical; Signal-anchor for type II membrane protein span at residues 19–39 (VFLSIFLVAGVAFGGIVFAMI). Residues 40–830 (KTAPPLNVQQ…QNHEDNKNKQ (791 aa)) lie on the Extracellular side of the membrane. Residues 57–229 (SILYDDKGQY…PSVYYPYSSA (173 aa)) form a transglycosylase region. E96 (proton donor; for transglycosylase activity) is an active-site residue. Positions 357-641 (ASAVIMDYHN…AARLWGDIMK (285 aa)) are transpeptidase. S398 (acyl-ester intermediate; for transpeptidase activity) is an active-site residue. A disordered region spans residues 754 to 830 (GGSLPPTEEK…QNHEDNKNKQ (77 aa)). A compositionally biased stretch (basic and acidic residues) spans 760-786 (TEEKNNSNTRDKNKDKNKNKNKDKNPS). Over residues 787 to 820 (QDKPNNNNNDNNSNNNNNNNDNNNNTKPPENDSN) the composition is skewed to low complexity. The span at 821-830 (QNHEDNKNKQ) shows a compositional bias: basic and acidic residues.

The protein in the N-terminal section; belongs to the glycosyltransferase 51 family. In the C-terminal section; belongs to the transpeptidase family.

It is found in the cell membrane. The catalysed reaction is [GlcNAc-(1-&gt;4)-Mur2Ac(oyl-L-Ala-gamma-D-Glu-L-Lys-D-Ala-D-Ala)](n)-di-trans,octa-cis-undecaprenyl diphosphate + beta-D-GlcNAc-(1-&gt;4)-Mur2Ac(oyl-L-Ala-gamma-D-Glu-L-Lys-D-Ala-D-Ala)-di-trans,octa-cis-undecaprenyl diphosphate = [GlcNAc-(1-&gt;4)-Mur2Ac(oyl-L-Ala-gamma-D-Glu-L-Lys-D-Ala-D-Ala)](n+1)-di-trans,octa-cis-undecaprenyl diphosphate + di-trans,octa-cis-undecaprenyl diphosphate + H(+). The enzyme catalyses Preferential cleavage: (Ac)2-L-Lys-D-Ala-|-D-Ala. Also transpeptidation of peptidyl-alanyl moieties that are N-acyl substituents of D-alanine.. The protein operates within cell wall biogenesis; peptidoglycan biosynthesis. Functionally, cell wall formation. Synthesis of cross-linked peptidoglycan from the lipid intermediates. The enzyme has a penicillin-insensitive transglycosylase N-terminal domain (formation of linear glycan strands) and a penicillin-sensitive transpeptidase C-terminal domain (cross-linking of the peptide subunits). The polypeptide is Penicillin-binding protein 1A (pbpA) (Clostridium botulinum (strain Hall / ATCC 3502 / NCTC 13319 / Type A)).